A 137-amino-acid chain; its full sequence is Ciliary microtubule inner protein 1 (137 aa).

Expressed in airway epithelial cells, renal tubular cells, pancreatic acinar cells and epithelial cells of the stomach, duodenum, and gallbladder (at protein level).

It is found in the cell projection. It localises to the cilium. This Homo sapiens (Human) protein is Ciliary microtubule inner protein 1.